The chain runs to 434 residues: Glutamyl-tRNA reductase (434 aa).

Substrate contacts are provided by residues 54 to 57, Ser-113, 118 to 120, and Gln-124; these read TCNR and EAQ. The active-site Nucleophile is the Cys-55. Position 193 to 198 (193 to 198) interacts with NADP(+); the sequence is GGGEVS.

The protein belongs to the glutamyl-tRNA reductase family. As to quaternary structure, homodimer.

It catalyses the reaction (S)-4-amino-5-oxopentanoate + tRNA(Glu) + NADP(+) = L-glutamyl-tRNA(Glu) + NADPH + H(+). The protein operates within porphyrin-containing compound metabolism; protoporphyrin-IX biosynthesis; 5-aminolevulinate from L-glutamyl-tRNA(Glu): step 1/2. It participates in porphyrin-containing compound metabolism; chlorophyll biosynthesis. Functionally, catalyzes the NADPH-dependent reduction of glutamyl-tRNA(Glu) to glutamate 1-semialdehyde (GSA). In Chloroflexus aurantiacus (strain ATCC 29366 / DSM 635 / J-10-fl), this protein is Glutamyl-tRNA reductase.